The sequence spans 342 residues: Fatty acid desaturase 6 (342 aa).

A run of 2 helical transmembrane segments spans residues 39–59 and 63–83; these read GVDCAILALSLLALPAGFLCL and NILAFATGITILGVCHYTLTV. Positions 87–91 match the Histidine box-1 motif; it reads HLATH. The chain crosses the membrane as a helical span at residues 100-120; the sequence is WSKILMIFFLEVCTAFSAEFA. The Histidine box-2 signature appears at 124–128; that stretch reads HVNLH. 2 helical membrane-spanning segments follow: residues 151–171 and 185–205; these read YVYMFLGPLLVPIITPLVALE and LGFICLGLYSQYWLFMNVSGF. Positions 277–281 match the Histidine box-3 motif; it reads HVEHH.

Belongs to the fatty acid desaturase type 1 family.

Its subcellular location is the membrane. It functions in the pathway lipid metabolism; fatty acid metabolism. In Mus musculus (Mouse), this protein is Fatty acid desaturase 6 (Fads6).